We begin with the raw amino-acid sequence, 462 residues long: Asparagine--tRNA ligase (462 aa).

It belongs to the class-II aminoacyl-tRNA synthetase family. In terms of assembly, homodimer.

It localises to the cytoplasm. The catalysed reaction is tRNA(Asn) + L-asparagine + ATP = L-asparaginyl-tRNA(Asn) + AMP + diphosphate + H(+). This chain is Asparagine--tRNA ligase, found in Borrelia garinii subsp. bavariensis (strain ATCC BAA-2496 / DSM 23469 / PBi) (Borreliella bavariensis).